Reading from the N-terminus, the 428-residue chain is MLDPKFLRNDIEQTALRLASRGYTLDVELLNQLEEKRKILQITTETLQAERNSRSKEVGQAAKRGEDITPLRTEMGLLGERLDSAKEDFALLAEQIKSLAYSMPNLPHESAPLGKDESENVEILKWGEPKKFDFEVKDHVDLGEALDGLDFKSAVKISGSRFIVMRGKIAKLHRALAQYMLDLHTDHHGYTEMYVPYLVNADSLYGTGQLPKFGDDLFNTKPATEEGIGMSLIPTAEVPLTNMSRDMIYDESDLPLKLTAHTPCFRSEAGSYGRDTRGLIRQHQFDKVEMVQFVHPEKSFEALEELTGHAEQVLKNLQLPYRKVVLCTGDMGFGATKTYDLEVWLPAQDQYREISSCSNIGDFQARRLQARFRPTGAKKPELLHTLNGSGLAVGRTLVAVLENYQLEDGSIEIPQVLQQYMGGLTHIG.

Position 235-237 (235-237) interacts with L-serine; that stretch reads TAE. 266 to 268 lines the ATP pocket; that stretch reads RSE. E289 is an L-serine binding site. 353–356 serves as a coordination point for ATP; that stretch reads EISS. Residue S389 participates in L-serine binding.

The protein belongs to the class-II aminoacyl-tRNA synthetase family. Type-1 seryl-tRNA synthetase subfamily. Homodimer. The tRNA molecule binds across the dimer.

The protein resides in the cytoplasm. The catalysed reaction is tRNA(Ser) + L-serine + ATP = L-seryl-tRNA(Ser) + AMP + diphosphate + H(+). The enzyme catalyses tRNA(Sec) + L-serine + ATP = L-seryl-tRNA(Sec) + AMP + diphosphate + H(+). Its pathway is aminoacyl-tRNA biosynthesis; selenocysteinyl-tRNA(Sec) biosynthesis; L-seryl-tRNA(Sec) from L-serine and tRNA(Sec): step 1/1. Functionally, catalyzes the attachment of serine to tRNA(Ser). Is also able to aminoacylate tRNA(Sec) with serine, to form the misacylated tRNA L-seryl-tRNA(Sec), which will be further converted into selenocysteinyl-tRNA(Sec). The polypeptide is Serine--tRNA ligase (Psychromonas ingrahamii (strain DSM 17664 / CCUG 51855 / 37)).